We begin with the raw amino-acid sequence, 282 residues long: UPF0759 protein YunF (282 aa).

This sequence belongs to the UPF0759 family.

The polypeptide is UPF0759 protein YunF (yunF) (Bacillus subtilis (strain 168)).